A 102-amino-acid polypeptide reads, in one-letter code: Acid shock protein (102 aa).

The signal sequence occupies residues 1 to 21; that stretch reads MKKVLALVVAAAMGLSSAAFA. Positions 22 to 41 are enriched in low complexity; the sequence is AETATTPAPTATTTKAAPAK. The propeptide occupies 22-58; that stretch reads AETATTPAPTATTTKAAPAKTTHHKKQHKAAPAQKAQ. The tract at residues 22-102 is disordered; that stretch reads AETATTPAPT…PAKPAAQPAA (81 aa). Basic residues predominate over residues 80–90; that stretch reads AAKKHAKKHSH. The span at 91-102 shows a compositional bias: low complexity; sequence QQPAKPAAQPAA.

It belongs to the Asr family. Post-translationally, proteolytic processing gives rise to the active protein.

Its subcellular location is the periplasm. In terms of biological role, required for growth and/or survival at acidic conditions. The protein is Acid shock protein of Escherichia coli O17:K52:H18 (strain UMN026 / ExPEC).